We begin with the raw amino-acid sequence, 490 residues long: Vacuolar amino acid transporter 7 (490 aa).

The Cytoplasmic segment spans residues 1–6; sequence MEATSS. A helical membrane pass occupies residues 7–27; sequence ALSSTANLVKTIVGAGTLAIP. Topologically, residues 28–34 are vacuolar; that stretch reads YSFKSDG. A helical membrane pass occupies residues 35–55; it reads VLVGVILTLLAAVTSGLGLFV. Over 56–84 the chain is Cytoplasmic; sequence LSKCSKTLINPRNSSFFTLCMLTYPTLAP. The helical transmembrane segment at 85–105 threads the bilayer; that stretch reads IFDLAMIVQCFGVGLSYLVLI. The Vacuolar portion of the chain corresponds to 106–108; the sequence is GDL. The helical transmembrane segment at 109–129 threads the bilayer; that stretch reads FPGLFGGERNYWIIASAVIII. At 130–143 the chain is on the cytoplasmic side; the sequence is PLCLVKKLDQLKYS. A helical membrane pass occupies residues 144 to 164; sequence SILGLFALAYISILVFSHFVF. Topologically, residues 165–190 are vacuolar; it reads ELGKGELTNILRNDICWWKIHDFKGL. The helical transmembrane segment at 191 to 211 threads the bilayer; the sequence is LSTFSIIIFAFTGSMNLFPMI. The Cytoplasmic portion of the chain corresponds to 212-221; it reads NELKDNSMEN. The chain crosses the membrane as a helical span at residues 222–242; sequence ITFVINNSISLSTALFLIVGL. Residues 243 to 264 lie on the Vacuolar side of the membrane; it reads SGYLTFGNETLGNLMLNYDPNS. A helical membrane pass occupies residues 265–285; it reads IWIVIGKFCLGSMLILSFPLL. The Cytoplasmic portion of the chain corresponds to 286–397; the sequence is FHPLRIAVNN…FVKSRFYWIT (112 aa). A disordered region spans residues 355 to 374; it reads NGNFDNGSIESQENNNDERG. Polar residues predominate over residues 357 to 368; the sequence is NFDNGSIESQEN. A helical membrane pass occupies residues 398–418; it reads ALLLISMYTLALSVQSFALVL. Residues 419 to 428 lie on the Vacuolar side of the membrane; it reads SFVGATGSTS. A helical transmembrane segment spans residues 429–449; that stretch reads ISFTLPGLLGYKLIGLDSLAI. Residues 450 to 463 lie on the Cytoplasmic side of the membrane; the sequence is GKMIPPKDRFYKRC. The helical transmembrane segment at 464–484 threads the bilayer; the sequence is SLLLVFYGLSVMFLSLYVTVF. Residues 485–490 lie on the Vacuolar side of the membrane; it reads NRSDEA.

Belongs to the amino acid/polyamine transporter 2 family.

It is found in the vacuole membrane. Functionally, probable amino acid transporter of unknown specificity. The protein is Vacuolar amino acid transporter 7 (AVT7) of Saccharomyces cerevisiae (strain ATCC 204508 / S288c) (Baker's yeast).